The sequence spans 159 residues: UPF0756 membrane protein PTH_1668 (159 aa).

Helical transmembrane passes span 15-37 (ILIT…SSCI), 61-81 (LGLV…KLTI), 117-137 (PEII…LRGT), and 138-158 (PCGP…ASLF).

The protein belongs to the UPF0756 family.

It localises to the cell membrane. The sequence is that of UPF0756 membrane protein PTH_1668 from Pelotomaculum thermopropionicum (strain DSM 13744 / JCM 10971 / SI).